Here is a 590-residue protein sequence, read N- to C-terminus: Aspartate--tRNA(Asp/Asn) ligase (590 aa).

Glu-175 provides a ligand contact to L-aspartate. The interval 199–202 is aspartate; it reads QQYK. 2 residues coordinate L-aspartate: Arg-221 and His-450. 221-223 is a binding site for ATP; that stretch reads RDE. Residue Glu-484 coordinates ATP. Arg-491 provides a ligand contact to L-aspartate. 536-539 provides a ligand contact to ATP; that stretch reads GVDR.

Belongs to the class-II aminoacyl-tRNA synthetase family. Type 1 subfamily. In terms of assembly, homodimer.

The protein resides in the cytoplasm. It carries out the reaction tRNA(Asx) + L-aspartate + ATP = L-aspartyl-tRNA(Asx) + AMP + diphosphate. Its function is as follows. Aspartyl-tRNA synthetase with relaxed tRNA specificity since it is able to aspartylate not only its cognate tRNA(Asp) but also tRNA(Asn). Reaction proceeds in two steps: L-aspartate is first activated by ATP to form Asp-AMP and then transferred to the acceptor end of tRNA(Asp/Asn). The chain is Aspartate--tRNA(Asp/Asn) ligase from Nitrobacter hamburgensis (strain DSM 10229 / NCIMB 13809 / X14).